The chain runs to 284 residues: Probable endonuclease 4 (284 aa).

Zn(2+) contacts are provided by His69, His109, Glu145, Asp179, His182, His216, Asp229, His231, and Glu261.

The protein belongs to the AP endonuclease 2 family. It depends on Zn(2+) as a cofactor.

It carries out the reaction Endonucleolytic cleavage to 5'-phosphooligonucleotide end-products.. Its function is as follows. Endonuclease IV plays a role in DNA repair. It cleaves phosphodiester bonds at apurinic or apyrimidinic (AP) sites, generating a 3'-hydroxyl group and a 5'-terminal sugar phosphate. The chain is Probable endonuclease 4 from Klebsiella pneumoniae subsp. pneumoniae (strain ATCC 700721 / MGH 78578).